The chain runs to 434 residues: Glutamate-1-semialdehyde 2,1-aminomutase 1 (434 aa).

An N6-(pyridoxal phosphate)lysine modification is found at lysine 270.

The protein belongs to the class-III pyridoxal-phosphate-dependent aminotransferase family. HemL subfamily. Homodimer. It depends on pyridoxal 5'-phosphate as a cofactor.

The protein localises to the cytoplasm. The catalysed reaction is (S)-4-amino-5-oxopentanoate = 5-aminolevulinate. Its pathway is porphyrin-containing compound metabolism; protoporphyrin-IX biosynthesis; 5-aminolevulinate from L-glutamyl-tRNA(Glu): step 2/2. The sequence is that of Glutamate-1-semialdehyde 2,1-aminomutase 1 from Bacillus anthracis (strain CDC 684 / NRRL 3495).